The sequence spans 245 residues: tRNA pseudouridine synthase A (245 aa).

The active-site Nucleophile is Asp-52. Tyr-111 contributes to the substrate binding site.

Belongs to the tRNA pseudouridine synthase TruA family. In terms of assembly, homodimer.

The enzyme catalyses uridine(38/39/40) in tRNA = pseudouridine(38/39/40) in tRNA. Formation of pseudouridine at positions 38, 39 and 40 in the anticodon stem and loop of transfer RNAs. In Thermotoga neapolitana (strain ATCC 49049 / DSM 4359 / NBRC 107923 / NS-E), this protein is tRNA pseudouridine synthase A.